Reading from the N-terminus, the 142-residue chain is uncharacterized protein (142 aa).

This is an uncharacterized protein from Homo sapiens (Human).